We begin with the raw amino-acid sequence, 511 residues long: Type 2 DNA topoisomerase 6 subunit B-like (511 aa).

The tract at residues 398 to 485 is disordered; that stretch reads DSAQGTEDAP…RALAPGRASL (88 aa). Polar residues predominate over residues 408–422; that stretch reads DNSSLELLADTSGQA. The span at 440-451 shows a compositional bias: low complexity; it reads LRSARAPSPSEA. The segment covering 466–475 has biased composition (basic and acidic residues); sequence RGREHREAHG.

It belongs to the TOP6B-like family. Heterotetramer of SPO11 and 2 TOP6BL chains. Interacts with SPO11. In terms of tissue distribution, detected in lung, spleen,colon and in skeletal muscle. Expressed in the ovaries, Fallopian tubes and uterus.

The protein localises to the chromosome. Component of a topoisomerase 6 complex specifically required for meiotic recombination. Together with SPO11, mediates DNA cleavage that forms the double-strand breaks (DSB) that initiate meiotic recombination. The complex promotes relaxation of negative and positive supercoiled DNA and DNA decatenation through cleavage and ligation cycles. This is Type 2 DNA topoisomerase 6 subunit B-like from Homo sapiens (Human).